Reading from the N-terminus, the 392-residue chain is 1-deoxy-D-xylulose 5-phosphate reductoisomerase (392 aa).

5 residues coordinate NADPH: Thr10, Gly11, Ser12, Ile13, and Asn124. Lys125 contributes to the 1-deoxy-D-xylulose 5-phosphate binding site. Glu126 lines the NADPH pocket. Asp150 provides a ligand contact to Mn(2+). 1-deoxy-D-xylulose 5-phosphate-binding residues include Ser151, Glu152, Ser180, and His203. A Mn(2+)-binding site is contributed by Glu152. Gly209 is an NADPH binding site. The 1-deoxy-D-xylulose 5-phosphate site is built by Ser216, Asn221, Lys222, and Glu225. Glu225 serves as a coordination point for Mn(2+).

Belongs to the DXR family. Mg(2+) is required as a cofactor. The cofactor is Mn(2+).

The enzyme catalyses 2-C-methyl-D-erythritol 4-phosphate + NADP(+) = 1-deoxy-D-xylulose 5-phosphate + NADPH + H(+). The protein operates within isoprenoid biosynthesis; isopentenyl diphosphate biosynthesis via DXP pathway; isopentenyl diphosphate from 1-deoxy-D-xylulose 5-phosphate: step 1/6. Catalyzes the NADPH-dependent rearrangement and reduction of 1-deoxy-D-xylulose-5-phosphate (DXP) to 2-C-methyl-D-erythritol 4-phosphate (MEP). The chain is 1-deoxy-D-xylulose 5-phosphate reductoisomerase from Saccharophagus degradans (strain 2-40 / ATCC 43961 / DSM 17024).